The sequence spans 558 residues: PE cleavage protein A (558 aa).

The 93-residue stretch at 1-93 folds into the PE domain; that stretch reads MSFLVVVPEF…SGSYAAAEAT (93 aa). The active site involves aspartate 297.

The protein belongs to the mycobacterial PE family. PGRS subfamily. Post-translationally, undergoes auto-proteolytic processing.

Its subcellular location is the secreted. It is found in the cell surface. Functionally, aspartic protease that processes the lipase LipY and other PE_PGRS proteins. Can also cleave itself. The protein is PE cleavage protein A of Mycobacterium tuberculosis (strain CDC 1551 / Oshkosh).